We begin with the raw amino-acid sequence, 388 residues long: Chorismate synthase (388 aa).

Residues R39 and R45 each contribute to the NADP(+) site. Residues 130–132, 251–252, A296, 311–315, and R337 each bind FMN; these read RSS, NA, and KPIPT.

It belongs to the chorismate synthase family. In terms of assembly, homotetramer. FMNH2 serves as cofactor.

It catalyses the reaction 5-O-(1-carboxyvinyl)-3-phosphoshikimate = chorismate + phosphate. It functions in the pathway metabolic intermediate biosynthesis; chorismate biosynthesis; chorismate from D-erythrose 4-phosphate and phosphoenolpyruvate: step 7/7. Its function is as follows. Catalyzes the anti-1,4-elimination of the C-3 phosphate and the C-6 proR hydrogen from 5-enolpyruvylshikimate-3-phosphate (EPSP) to yield chorismate, which is the branch point compound that serves as the starting substrate for the three terminal pathways of aromatic amino acid biosynthesis. This reaction introduces a second double bond into the aromatic ring system. The sequence is that of Chorismate synthase from Streptococcus equi subsp. equi (strain 4047).